The primary structure comprises 309 residues: Spermatid maturation protein 1 (309 aa).

The helical transmembrane segment at 29–49 threads the bilayer; that stretch reads VLLLLGLIICINISINIVTLL. Residues 209–231 form a disordered region; that stretch reads PPPPSPEAPSHKNGGEGAVPEAE. A coiled-coil region spans residues 259 to 285; the sequence is RIVYDARDMRRRLRELTREVEALSGCY.

It is found in the membrane. It localises to the cytoplasm. Its function is as follows. Required for proper cytoplasm removal during spermatogenesis. The sequence is that of Spermatid maturation protein 1 (SPEM1) from Homo sapiens (Human).